The following is a 92-amino-acid chain: Small ribosomal subunit protein uS19c (92 aa).

It belongs to the universal ribosomal protein uS19 family.

It is found in the plastid. Its subcellular location is the chloroplast. Protein S19 forms a complex with S13 that binds strongly to the 16S ribosomal RNA. The protein is Small ribosomal subunit protein uS19c (rps19) of Glycine max (Soybean).